The chain runs to 169 residues: Ribosome maturation factor RimM (169 aa).

The PRC barrel domain maps to 94-167 (ENEFYFHEII…KITIEVMEGL (74 aa)).

It belongs to the RimM family. In terms of assembly, binds ribosomal protein uS19.

The protein localises to the cytoplasm. Its function is as follows. An accessory protein needed during the final step in the assembly of 30S ribosomal subunit, possibly for assembly of the head region. Essential for efficient processing of 16S rRNA. May be needed both before and after RbfA during the maturation of 16S rRNA. It has affinity for free ribosomal 30S subunits but not for 70S ribosomes. The polypeptide is Ribosome maturation factor RimM (Listeria monocytogenes serotype 4b (strain F2365)).